Reading from the N-terminus, the 343-residue chain is Ubiquitin thioesterase OTU1 (343 aa).

The interval 45-123 (RCKAKGGTHL…IVEEDQTRPK (79 aa)) is UBX-like. The region spanning 144-269 (LTRTAVPADN…GIHYDPLQRN (126 aa)) is the OTU domain. The interval 149 to 155 (VPADNSC) is cys-loop. Asp-152 is a catalytic residue. Cys-155 serves as the catalytic Nucleophile. Positions 208–218 (IRRDDTWGGAI) are variable-loop. The his-loop stretch occupies residues 258-262 (YDGIH). Ile-261 is a substrate binding site. His-262 is a catalytic residue. The S2 site stretch occupies residues 286–291 (DIVLVQ). The C2H2-type zinc-finger motif lies at 313-337 (LRCMICQKGLTGQAEARDHARETGH). Residue His-337 is part of the active site.

In terms of assembly, interacts with VCP; the interaction is direct. Interacts with FAF2/UBXD8. Interacts with DERL1; however interaction is dependent on the UBAX-like region, suggesting that it may be indirect. Interacts with PLAA, UBXN6 and VCP; may form a complex involved in macroautophagy.

It localises to the cytoplasm. The enzyme catalyses Thiol-dependent hydrolysis of ester, thioester, amide, peptide and isopeptide bonds formed by the C-terminal Gly of ubiquitin (a 76-residue protein attached to proteins as an intracellular targeting signal).. In terms of biological role, hydrolase that can remove conjugated ubiquitin from proteins and participates in endoplasmic reticulum-associated degradation (ERAD) for misfolded lumenal proteins. May act by triming the ubiquitin chain on the associated substrate to facilitate their threading through the VCP/p97 pore. Ubiquitin moieties on substrates may present a steric impediment to the threading process when the substrate is transferred to the VCP pore and threaded through VCP's axial channel. Mediates deubiquitination of 'Lys-27'-, 'Lys-29'- and 'Lys-33'-linked polyubiquitin chains. Also able to hydrolyze 'Lys-11'-linked ubiquitin chains. Cleaves both polyubiquitin and di-ubiquitin. May play a role in macroautophagy, regulating for instance the clearance of damaged lysosomes. May recruit PLAA, UBXN6 and VCP to damaged lysosome membranes decorated with K48-linked ubiquitin chains and remove these chains allowing autophagosome formation. This chain is Ubiquitin thioesterase OTU1 (Yod1), found in Mus musculus (Mouse).